Consider the following 337-residue polypeptide: DNA-directed RNA polymerase subunit alpha (337 aa).

Residues 1–233 are alpha N-terminal domain (alpha-NTD); that stretch reads MIQKNWQELI…DQLSIFVNFE (233 aa). The segment at 249-337 is alpha C-terminal domain (alpha-CTD); the sequence is FNPALLKKVD…DLAKRYEDQY (89 aa).

Belongs to the RNA polymerase alpha chain family. As to quaternary structure, homodimer. The RNAP catalytic core consists of 2 alpha, 1 beta, 1 beta' and 1 omega subunit. When a sigma factor is associated with the core the holoenzyme is formed, which can initiate transcription.

It carries out the reaction RNA(n) + a ribonucleoside 5'-triphosphate = RNA(n+1) + diphosphate. Functionally, DNA-dependent RNA polymerase catalyzes the transcription of DNA into RNA using the four ribonucleoside triphosphates as substrates. The sequence is that of DNA-directed RNA polymerase subunit alpha from Brucella melitensis biotype 2 (strain ATCC 23457).